The sequence spans 164 residues: MRIIFLLIALICAGLVSYALYLQLADGLLPCPLCIFQRMAYWLVGITALFAFIHHPQRLGRRIYCGLIILFSLAGAIVAGRQAWLVRFPEAFECGISPEEAFLNELPLARWWPDMFEANGDCTDGTWQFLSLTIPDWSLLIFLAFSLIAGLLWRSRSISSSNLK.

Topologically, residues 1–4 are cytoplasmic; it reads MRII. A helical transmembrane segment spans residues 5 to 21; it reads FLLIALICAGLVSYALY. The Periplasmic segment spans residues 22–39; sequence LQLADGLLPCPLCIFQRM. Residues Cys-31 and Cys-34 are joined by a disulfide bond. The helical transmembrane segment at 40 to 56 threads the bilayer; sequence AYWLVGITALFAFIHHP. Topologically, residues 57-62 are cytoplasmic; the sequence is QRLGRR. The helical transmembrane segment at 63–80 threads the bilayer; the sequence is IYCGLIILFSLAGAIVAG. Residues 81-136 are Periplasmic-facing; it reads RQAWLVRFPEAFECGISPEEAFLNELPLARWWPDMFEANGDCTDGTWQFLSLTIPD. The cysteines at positions 94 and 122 are disulfide-linked. The helical transmembrane segment at 137–155 threads the bilayer; sequence WSLLIFLAFSLIAGLLWRS. The Cytoplasmic segment spans residues 156–164; the sequence is RSISSSNLK.

Belongs to the DsbB family.

It localises to the cell inner membrane. Functionally, required for disulfide bond formation in some periplasmic proteins. Acts by oxidizing the DsbA protein. The sequence is that of Disulfide bond formation protein B from Nitrosomonas europaea (strain ATCC 19718 / CIP 103999 / KCTC 2705 / NBRC 14298).